We begin with the raw amino-acid sequence, 1072 residues long: DNA-directed RNA polymerase subunit beta (1072 aa).

It belongs to the RNA polymerase beta chain family. In terms of assembly, in plastids the minimal PEP RNA polymerase catalytic core is composed of four subunits: alpha, beta, beta', and beta''. When a (nuclear-encoded) sigma factor is associated with the core the holoenzyme is formed, which can initiate transcription.

It localises to the plastid. The protein resides in the chloroplast. It carries out the reaction RNA(n) + a ribonucleoside 5'-triphosphate = RNA(n+1) + diphosphate. DNA-dependent RNA polymerase catalyzes the transcription of DNA into RNA using the four ribonucleoside triphosphates as substrates. This is DNA-directed RNA polymerase subunit beta from Lobularia maritima (Sweet alyssum).